The sequence spans 96 residues: U-reduvitoxin-Pr12a (96 aa).

Residues M1–A20 form the signal peptide. 3 disulfides stabilise this stretch: C21-C38, C33-C53, and C36-C47. Pacifastin domains lie at C21 to P55 and K59 to K94. Residues P54–R56 form a pro-Pro-Arg motif necessary for proteolytic processing region. 3 cysteine pairs are disulfide-bonded: C62-C77, C72-C91, and C75-C86.

The protein belongs to the protease inhibitor I19 family. Expressed by the venom gland.

It is found in the secreted. Inhibits trypsin activity and prophenoloxidase (PPO) activation, an enzyme essential for both clotting and insect innate immune responses. It does not inhibit activity of chymotrypsin and protease K, and has no effect on phenoloxidase (PO) activity. This chain is U-reduvitoxin-Pr12a, found in Platymeris rhadamanthus (Red spot assassin bug).